The following is a 425-amino-acid chain: Formyl-CoA:oxalate CoA-transferase (425 aa).

CoA-binding positions include 17–18 (QS), R38, 72–75 (LDTK), 96–98 (NFG), R104, and 136–139 (KVYE). Residue D168 is the Nucleophile of the active site. 247-249 (GGQ) lines the substrate pocket.

Belongs to the CoA-transferase III family. Frc subfamily. Homodimer.

The enzyme catalyses formyl-CoA + oxalate = oxalyl-CoA + formate. Its pathway is metabolic intermediate degradation; oxalate degradation; CO(2) and formate from oxalate: step 1/2. Its function is as follows. Involved in the catabolism of oxalate and in the adapatation to low pH via the induction of the oxalate-dependent acid tolerance response (ATR). Catalyzes the transfer of the CoA moiety from formyl-CoA to oxalate. This Rhodopseudomonas palustris (strain ATCC BAA-98 / CGA009) protein is Formyl-CoA:oxalate CoA-transferase.